Consider the following 124-residue polypeptide: Small ribosomal subunit protein uS12 (124 aa).

At aspartate 89 the chain carries 3-methylthioaspartic acid.

The protein belongs to the universal ribosomal protein uS12 family. In terms of assembly, part of the 30S ribosomal subunit. Contacts proteins S8 and S17. May interact with IF1 in the 30S initiation complex.

Functionally, with S4 and S5 plays an important role in translational accuracy. Interacts with and stabilizes bases of the 16S rRNA that are involved in tRNA selection in the A site and with the mRNA backbone. Located at the interface of the 30S and 50S subunits, it traverses the body of the 30S subunit contacting proteins on the other side and probably holding the rRNA structure together. The combined cluster of proteins S8, S12 and S17 appears to hold together the shoulder and platform of the 30S subunit. In Proteus mirabilis (strain HI4320), this protein is Small ribosomal subunit protein uS12.